Reading from the N-terminus, the 447-residue chain is T-box transcription factor TBX20 (447 aa).

The interval 62–81 is disordered; that stretch reads DAHGEFGGGSGSSPSSSSLC. Residues 109 to 288 constitute a DNA-binding region (T-box); sequence LWDKFHELGT…SNPFAKGFRD (180 aa). The interval 316–340 is disordered; the sequence is TYGGEEDVLGDESQTTPNRGSAFTT. Residues 327–340 are compositionally biased toward polar residues; it reads ESQTTPNRGSAFTT.

Its subcellular location is the nucleus. In terms of biological role, acts as a transcriptional activator and repressor required for cardiac development and may have key roles in the maintenance of functional and structural phenotypes in adult heart. The polypeptide is T-box transcription factor TBX20 (TBX20) (Homo sapiens (Human)).